A 158-amino-acid polypeptide reads, in one-letter code: C-type lectin BML-1 (158 aa).

A signal peptide spans 1–23 (MGHFTFTGLCLLAMFLSLRGAEC). Disulfide bonds link Cys-26-Cys-37, Cys-54-Cys-154, Cys-61-Cys-156, and Cys-129-Cys-146. The C-type lectin domain occupies 33-155 (KNGLCYKVFS…CAALRPFLCQ (123 aa)). Residues Gln-119, Asp-121, and Glu-127 each contribute to the Ca(2+) site. The Galactose-binding signature appears at 119–121 (QPD). Asn-134 is a glycosylation site (N-linked (GlcNAc...) asparagine). Ca(2+) is bound by residues Asn-142 and Asp-143.

It belongs to the true venom lectin family. As to quaternary structure, homodimer; non-covalently linked. In terms of tissue distribution, expressed by the venom gland.

The protein resides in the secreted. Its function is as follows. Recombinant C-type lectin BML-1 is able to agglutinate erythrocytes. May be a calcium-dependent lectin. This chain is C-type lectin BML-1, found in Bungarus multicinctus (Many-banded krait).